A 303-amino-acid polypeptide reads, in one-letter code: tRNA dimethylallyltransferase 1 (303 aa).

9-16 is an ATP binding site; the sequence is GPTASGKT. 11–16 is a substrate binding site; sequence TASGKT. 3 interaction with substrate tRNA regions span residues 34 to 37, 158 to 162, and 239 to 244; these read DSAL, QRLIR, and RCVGYR.

This sequence belongs to the IPP transferase family. In terms of assembly, monomer. It depends on Mg(2+) as a cofactor.

The catalysed reaction is adenosine(37) in tRNA + dimethylallyl diphosphate = N(6)-dimethylallyladenosine(37) in tRNA + diphosphate. Its function is as follows. Catalyzes the transfer of a dimethylallyl group onto the adenine at position 37 in tRNAs that read codons beginning with uridine, leading to the formation of N6-(dimethylallyl)adenosine (i(6)A). The polypeptide is tRNA dimethylallyltransferase 1 (Shewanella sediminis (strain HAW-EB3)).